Here is an 81-residue protein sequence, read N- to C-terminus: ATP synthase subunit c (81 aa).

2 helical membrane passes run 3–23 and 57–77; these read PLIAAASVVAAALAVGLGAIG and LAFMEALTIYGLVVSLVLLFA.

It belongs to the ATPase C chain family. As to quaternary structure, F-type ATPases have 2 components, F(1) - the catalytic core - and F(0) - the membrane proton channel. F(1) has five subunits: alpha(3), beta(3), gamma(1), delta(1), epsilon(1). F(0) has four main subunits: a(1), b(1), b'(1) and c(10-14). The alpha and beta chains form an alternating ring which encloses part of the gamma chain. F(1) is attached to F(0) by a central stalk formed by the gamma and epsilon chains, while a peripheral stalk is formed by the delta, b and b' chains.

The protein localises to the cellular thylakoid membrane. Functionally, f(1)F(0) ATP synthase produces ATP from ADP in the presence of a proton or sodium gradient. F-type ATPases consist of two structural domains, F(1) containing the extramembraneous catalytic core and F(0) containing the membrane proton channel, linked together by a central stalk and a peripheral stalk. During catalysis, ATP synthesis in the catalytic domain of F(1) is coupled via a rotary mechanism of the central stalk subunits to proton translocation. Its function is as follows. Key component of the F(0) channel; it plays a direct role in translocation across the membrane. A homomeric c-ring of between 10-14 subunits forms the central stalk rotor element with the F(1) delta and epsilon subunits. The polypeptide is ATP synthase subunit c (Trichodesmium erythraeum (strain IMS101)).